A 141-amino-acid chain; its full sequence is Large ribosomal subunit protein uL11 (141 aa).

Belongs to the universal ribosomal protein uL11 family. Part of the ribosomal stalk of the 50S ribosomal subunit. Interacts with L10 and the large rRNA to form the base of the stalk. L10 forms an elongated spine to which L12 dimers bind in a sequential fashion forming a multimeric L10(L12)X complex. One or more lysine residues are methylated.

Forms part of the ribosomal stalk which helps the ribosome interact with GTP-bound translation factors. This is Large ribosomal subunit protein uL11 from Thermosipho africanus (strain TCF52B).